The chain runs to 192 residues: uncharacterized protein (192 aa).

This is an uncharacterized protein from Aquifex aeolicus (strain VF5).